Here is a 464-residue protein sequence, read N- to C-terminus: Cysteine--tRNA ligase (464 aa).

C28 serves as a coordination point for Zn(2+). The 'HIGH' region motif lies at 30-40 (ITAYDFCHIGH). Residues C210, H235, and E239 each contribute to the Zn(2+) site. The 'KMSKS' region signature appears at 267 to 271 (KMSKS). K270 lines the ATP pocket.

It belongs to the class-I aminoacyl-tRNA synthetase family. In terms of assembly, monomer. Zn(2+) serves as cofactor.

It is found in the cytoplasm. The enzyme catalyses tRNA(Cys) + L-cysteine + ATP = L-cysteinyl-tRNA(Cys) + AMP + diphosphate. This chain is Cysteine--tRNA ligase, found in Buchnera aphidicola subsp. Baizongia pistaciae (strain Bp).